A 408-amino-acid chain; its full sequence is Argininosuccinate synthase (408 aa).

ATP-binding positions include 14–22 (AYSGGLDTS) and Ala-41. L-citrulline contacts are provided by Tyr-92 and Ser-97. Gly-122 serves as a coordination point for ATP. Residues Thr-124, Asn-128, and Asp-129 each coordinate L-aspartate. Asn-128 lines the L-citrulline pocket. The L-citrulline site is built by Arg-132, Ser-181, Ser-190, Glu-266, and Tyr-278.

This sequence belongs to the argininosuccinate synthase family. Type 1 subfamily. In terms of assembly, homotetramer.

It localises to the cytoplasm. It carries out the reaction L-citrulline + L-aspartate + ATP = 2-(N(omega)-L-arginino)succinate + AMP + diphosphate + H(+). The protein operates within amino-acid biosynthesis; L-arginine biosynthesis; L-arginine from L-ornithine and carbamoyl phosphate: step 2/3. The polypeptide is Argininosuccinate synthase (Pelobacter propionicus (strain DSM 2379 / NBRC 103807 / OttBd1)).